Here is a 214-residue protein sequence, read N- to C-terminus: Adenylate kinase (214 aa).

10–15 lines the ATP pocket; it reads GAGKGT. The interval 30 to 59 is NMP; the sequence is STGDILRAAVKDMTPMGGKAKSFMDAGALV. AMP is bound by residues threonine 31, arginine 36, 57 to 59, 85 to 88, and glutamine 92; these read ALV and GFPR. The interval 126 to 163 is LID; it reads GRRTCRNCGKGFHVSFDPPKSSGICDECSGELYQRDDD. Residue arginine 127 participates in ATP binding. 4 residues coordinate Zn(2+): cysteine 130, cysteine 133, cysteine 150, and cysteine 153. AMP-binding residues include arginine 160 and arginine 171. Glycine 199 contributes to the ATP binding site.

Belongs to the adenylate kinase family. As to quaternary structure, monomer.

It is found in the cytoplasm. It catalyses the reaction AMP + ATP = 2 ADP. It functions in the pathway purine metabolism; AMP biosynthesis via salvage pathway; AMP from ADP: step 1/1. Functionally, catalyzes the reversible transfer of the terminal phosphate group between ATP and AMP. Plays an important role in cellular energy homeostasis and in adenine nucleotide metabolism. The polypeptide is Adenylate kinase (Geotalea daltonii (strain DSM 22248 / JCM 15807 / FRC-32) (Geobacter daltonii)).